The primary structure comprises 379 residues: Bifunctional enzyme IspD/IspF (379 aa).

The segment at 1-213 (MSQVSLVVMG…QGFEPPFGGC (213 aa)) is 2-C-methyl-D-erythritol 4-phosphate cytidylyltransferase. The segment at 214–379 (YGGSGFDVHA…DWTKHACFNR (166 aa)) is 2-C-methyl-D-erythritol 2,4-cyclodiphosphate synthase. 2 residues coordinate a divalent metal cation: Asp-220 and His-222. 4-CDP-2-C-methyl-D-erythritol 2-phosphate-binding positions include 220–222 (DVH) and 246–247 (HS). His-254 is an a divalent metal cation binding site. Residues 268–270 (DIG), 273–277 (FPDSD), 344–347 (TTTE), Phe-351, and Arg-354 each bind 4-CDP-2-C-methyl-D-erythritol 2-phosphate.

This sequence in the N-terminal section; belongs to the IspD/TarI cytidylyltransferase family. IspD subfamily. In the C-terminal section; belongs to the IspF family. A divalent metal cation serves as cofactor.

It catalyses the reaction 2-C-methyl-D-erythritol 4-phosphate + CTP + H(+) = 4-CDP-2-C-methyl-D-erythritol + diphosphate. The catalysed reaction is 4-CDP-2-C-methyl-D-erythritol 2-phosphate = 2-C-methyl-D-erythritol 2,4-cyclic diphosphate + CMP. It participates in isoprenoid biosynthesis; isopentenyl diphosphate biosynthesis via DXP pathway; isopentenyl diphosphate from 1-deoxy-D-xylulose 5-phosphate: step 2/6. Its pathway is isoprenoid biosynthesis; isopentenyl diphosphate biosynthesis via DXP pathway; isopentenyl diphosphate from 1-deoxy-D-xylulose 5-phosphate: step 4/6. Its function is as follows. Bifunctional enzyme that catalyzes the formation of 4-diphosphocytidyl-2-C-methyl-D-erythritol from CTP and 2-C-methyl-D-erythritol 4-phosphate (MEP) (IspD), and catalyzes the conversion of 4-diphosphocytidyl-2-C-methyl-D-erythritol 2-phosphate (CDP-ME2P) to 2-C-methyl-D-erythritol 2,4-cyclodiphosphate (ME-CPP) with a corresponding release of cytidine 5-monophosphate (CMP) (IspF). This Wolinella succinogenes (strain ATCC 29543 / DSM 1740 / CCUG 13145 / JCM 31913 / LMG 7466 / NCTC 11488 / FDC 602W) (Vibrio succinogenes) protein is Bifunctional enzyme IspD/IspF.